The sequence spans 364 residues: D-alanine--D-alanine ligase (364 aa).

One can recognise an ATP-grasp domain in the interval Lys145–Gln354. Glu181–Glu236 serves as a coordination point for ATP. Residues Asp307, Glu321, and Asn323 each contribute to the Mg(2+) site.

It belongs to the D-alanine--D-alanine ligase family. Requires Mg(2+) as cofactor. Mn(2+) serves as cofactor.

Its subcellular location is the cytoplasm. It catalyses the reaction 2 D-alanine + ATP = D-alanyl-D-alanine + ADP + phosphate + H(+). It functions in the pathway cell wall biogenesis; peptidoglycan biosynthesis. Functionally, cell wall formation. This is D-alanine--D-alanine ligase from Nostoc sp. (strain PCC 7120 / SAG 25.82 / UTEX 2576).